The primary structure comprises 311 residues: Pyrimidine-specific ribonucleoside hydrolase RihA (311 aa).

Residue His240 is part of the active site.

The protein belongs to the IUNH family. RihA subfamily.

Functionally, hydrolyzes cytidine or uridine to ribose and cytosine or uracil, respectively. The sequence is that of Pyrimidine-specific ribonucleoside hydrolase RihA from Salmonella paratyphi C (strain RKS4594).